Here is a 146-residue protein sequence, read N- to C-terminus: Large ribosomal subunit protein uL15 (146 aa).

Residues 1-13 (MKLHELQPAEGSR) show a composition bias toward basic and acidic residues. The disordered stretch occupies residues 1 to 58 (MKLHELQPAEGSRKVRNRVGRGIGSGNGKTAGKGHKGQKARSGGGVRPGFEGGQNPLY). Composition is skewed to gly residues over residues 21-31 (RGIGSGNGKTA) and 42-52 (SGGGVRPGFEG).

The protein belongs to the universal ribosomal protein uL15 family. As to quaternary structure, part of the 50S ribosomal subunit.

Functionally, binds to the 23S rRNA. The polypeptide is Large ribosomal subunit protein uL15 (Shouchella clausii (strain KSM-K16) (Alkalihalobacillus clausii)).